The following is a 193-amino-acid chain: Bifunctional protein PyrR (193 aa).

Residues 48-49 (TR), Arg-89, Arg-93, 110-118 (DDVLFSGRT), Arg-143, and Val-167 each bind substrate. The PRPP-binding motif lies at 106-118 (VVLVDDVLFSGRT).

This sequence belongs to the purine/pyrimidine phosphoribosyltransferase family. PyrR subfamily.

It catalyses the reaction UMP + diphosphate = 5-phospho-alpha-D-ribose 1-diphosphate + uracil. In terms of biological role, regulates the transcription of the pyrimidine nucleotide (pyr) operon in response to exogenous pyrimidines. Also displays a weak uracil phosphoribosyltransferase activity which is not physiologically significant. This chain is Bifunctional protein PyrR, found in Streptomyces coelicolor (strain ATCC BAA-471 / A3(2) / M145).